Consider the following 446-residue polypeptide: Signal recognition particle 54 kDa protein (446 aa).

GTP is bound by residues 103 to 110 (GVQGTGKT), 185 to 189 (DTAGR), and 245 to 248 (TKMD).

This sequence belongs to the GTP-binding SRP family. SRP54 subfamily. As to quaternary structure, part of the signal recognition particle protein translocation system, which is composed of SRP and FtsY. Archaeal SRP consists of a 7S RNA molecule of 300 nucleotides and two protein subunits: SRP54 and SRP19.

Its subcellular location is the cytoplasm. The catalysed reaction is GTP + H2O = GDP + phosphate + H(+). Its function is as follows. Involved in targeting and insertion of nascent membrane proteins into the cytoplasmic membrane. Binds to the hydrophobic signal sequence of the ribosome-nascent chain (RNC) as it emerges from the ribosomes. The SRP-RNC complex is then targeted to the cytoplasmic membrane where it interacts with the SRP receptor FtsY. In Metallosphaera sedula (strain ATCC 51363 / DSM 5348 / JCM 9185 / NBRC 15509 / TH2), this protein is Signal recognition particle 54 kDa protein.